A 1162-amino-acid polypeptide reads, in one-letter code: PAN2-PAN3 deadenylation complex catalytic subunit PAN2 (1162 aa).

WD repeat units follow at residues 27–66 (AKEK…YTRH), 153–193 (NTVQ…VVKT), 196–233 (GHSC…NVYD), and 300–339 (HPCQ…TGFT). Positions 341–491 (TATTILEYPD…LMNYKPSNDR (151 aa)) are linker. Positions 401–443 (VPLPPKSSAASSSHTALSTSSDSRPNTARSGNPSSGGQKYRLL) are disordered. Positions 407–423 (SSAASSSHTALSTSSDS) are enriched in low complexity. Polar residues predominate over residues 424-437 (RPNTARSGNPSSGG). Positions 492–904 (EVPPAFTKLQ…TPEIAIYSDA (413 aa)) constitute a USP domain. Residues 956 to 1126 (VALDAEFVAL…IEDAYTALVL (171 aa)) enclose the Exonuclease domain. Residues D959, E961, D1068, and D1119 each coordinate a divalent metal cation.

This sequence belongs to the peptidase C19 family. PAN2 subfamily. In terms of assembly, forms a heterotrimer with an asymmetric homodimer of the regulatory subunit PAN3 to form the poly(A)-nuclease (PAN) deadenylation complex. A divalent metal cation is required as a cofactor.

Its subcellular location is the cytoplasm. It catalyses the reaction Exonucleolytic cleavage of poly(A) to 5'-AMP.. Positively regulated by the regulatory subunit PAN3. Catalytic subunit of the poly(A)-nuclease (PAN) deadenylation complex, one of two cytoplasmic mRNA deadenylases involved in mRNA turnover. PAN specifically shortens poly(A) tails of RNA and the activity is stimulated by poly(A)-binding protein PAB1. PAN deadenylation is followed by rapid degradation of the shortened mRNA tails by the CCR4-NOT complex. Deadenylated mRNAs are then degraded by two alternative mechanisms, namely exosome-mediated 3'-5' exonucleolytic degradation, or deadenylation-dependent mRNA decaping and subsequent 5'-3' exonucleolytic degradation by XRN1. May also be involved in post-transcriptional maturation of mRNA poly(A) tails. The protein is PAN2-PAN3 deadenylation complex catalytic subunit PAN2 of Eremothecium gossypii (strain ATCC 10895 / CBS 109.51 / FGSC 9923 / NRRL Y-1056) (Yeast).